Consider the following 37-residue polypeptide: Trypsin inhibitor 3 (37 aa).

Intrachain disulfides connect Cys4/Cys21, Cys11/Cys25, and Cys20/Cys36.

Its function is as follows. Trypsin inhibitor. In Spinacia oleracea (Spinach), this protein is Trypsin inhibitor 3.